Consider the following 352-residue polypeptide: UPF0252 protein MJ1282 (352 aa).

This sequence belongs to the UPF0252 family.

The chain is UPF0252 protein MJ1282 from Methanocaldococcus jannaschii (strain ATCC 43067 / DSM 2661 / JAL-1 / JCM 10045 / NBRC 100440) (Methanococcus jannaschii).